The primary structure comprises 172 residues: Ribosome maturation factor RimP (172 aa).

It belongs to the RimP family.

It localises to the cytoplasm. Its function is as follows. Required for maturation of 30S ribosomal subunits. The sequence is that of Ribosome maturation factor RimP from Nitratidesulfovibrio vulgaris (strain ATCC 29579 / DSM 644 / CCUG 34227 / NCIMB 8303 / VKM B-1760 / Hildenborough) (Desulfovibrio vulgaris).